Reading from the N-terminus, the 501-residue chain is ADP,ATP carrier protein 3 (501 aa).

Transmembrane regions (helical) follow at residues L23–L43, I59–Y79, Y90–I110, Y146–W166, P183–F203, I227–F247, I293–A313, V326–I346, L361–I381, C387–L407, F446–T466, and I470–I490.

This sequence belongs to the ADP/ATP translocase tlc family.

It is found in the cell membrane. Functionally, provides the rickettsial cell with host ATP in exchange for rickettsial ADP. This is an obligate exchange system. This energy acquiring activity is an important component of rickettsial parasitism. The polypeptide is ADP,ATP carrier protein 3 (tlcC) (Rickettsia conorii (strain ATCC VR-613 / Malish 7)).